Here is a 302-residue protein sequence, read N- to C-terminus: Rhomboid-related protein 2 (302 aa).

The interval 1–38 (MAVAHEMEMESVNLNMEREGKEEPEEEKMKGNGEGKDF) is disordered. Over residues 16 to 38 (MEREGKEEPEEEKMKGNGEGKDF) the composition is skewed to basic and acidic residues. 7 helical membrane passes run 71 to 91 (PLFIILISLAELAVFIYYAVW), 127 to 147 (LVHAGVQHIVGNLLMQIVLGI), 158 to 178 (VGLVYLAGVLAGSLASSIFDP), 182 to 202 (LVGASGGVYALMGGYFMNVIV), 211 to 231 (FGIVRLLVIILIVASDMGFAL), 244 to 264 (VSFAAHIAGGFAGMSIGYTVF), and 277 to 297 (FWIAIAAYVACLLFAVFFNIF). The active-site Nucleophile is serine 186. Residue histidine 249 is part of the active site.

This sequence belongs to the peptidase S54 family. In terms of processing, proteolytic processing of the proenzyme produces an N- and a C-terminal fragment. The processing is required for activation of the protease.

Its subcellular location is the cell membrane. It catalyses the reaction Cleaves type-1 transmembrane domains using a catalytic dyad composed of serine and histidine that are contributed by different transmembrane domains.. Functionally, involved in regulated intramembrane proteolysis and the subsequent release of functional polypeptides from their membrane anchors. Known substrate: EFNB3. This chain is Rhomboid-related protein 2 (Rhbdl2), found in Mus musculus (Mouse).